We begin with the raw amino-acid sequence, 159 residues long: Transcriptional repressor NrdR (159 aa).

The segment at 3–34 (CPFCRHDDTQVVDSRVSEDGAAIRRRRRCSAC) is a zinc-finger region. The ATP-cone domain occupies 49–139 (PAVVKKDGSR…VYRRFEDVSE (91 aa)).

This sequence belongs to the NrdR family. The cofactor is Zn(2+).

Functionally, negatively regulates transcription of bacterial ribonucleotide reductase nrd genes and operons by binding to NrdR-boxes. This is Transcriptional repressor NrdR from Burkholderia pseudomallei (strain 1106a).